The chain runs to 904 residues: NADH-quinone oxidoreductase subunit G (904 aa).

The 2Fe-2S ferredoxin-type domain occupies 1-83 (MATIHVDGKE…GSWISIDDEE (83 aa)). Cys34, Cys45, Cys48, and Cys67 together coordinate [2Fe-2S] cluster. The 4Fe-4S His(Cys)3-ligated-type domain maps to 83–122 (EAKVFRASVVEWLMTNHPHDCPVCEEGGHCHLQDMTVMTG). [4Fe-4S] cluster is bound by residues His99, Cys103, Cys106, Cys112, Cys151, Cys154, Cys157, Cys201, Cys228, Cys231, Cys235, and Cys263. One can recognise a 4Fe-4S Mo/W bis-MGD-type domain in the interval 221 to 277 (MQFSPSICHGCSSGCNISPGERYGELRRIENRFNGSVNQYFLCDRGRFGYGYVNRKD).

This sequence belongs to the complex I 75 kDa subunit family. As to quaternary structure, composed of 13 different subunits. Subunits NuoCD, E, F, and G constitute the peripheral sector of the complex. The cofactor is [2Fe-2S] cluster. Requires [4Fe-4S] cluster as cofactor.

It carries out the reaction a quinone + NADH + 5 H(+)(in) = a quinol + NAD(+) + 4 H(+)(out). Its function is as follows. NDH-1 shuttles electrons from NADH, via FMN and iron-sulfur (Fe-S) centers, to quinones in the respiratory chain. The immediate electron acceptor for the enzyme in this species is believed to be ubiquinone. Couples the redox reaction to proton translocation (for every two electrons transferred, four hydrogen ions are translocated across the cytoplasmic membrane), and thus conserves the redox energy in a proton gradient. Required for plants roots colonization. This Pseudomonas fluorescens protein is NADH-quinone oxidoreductase subunit G (nuoG).